The sequence spans 1098 residues: Mediator of RNA polymerase II transcription subunit 5 (1098 aa).

Residues proline 1019–lysine 1041 are disordered. The span at aspartate 1021–lysine 1041 shows a compositional bias: basic and acidic residues.

It belongs to the Mediator complex subunit 5 family. Component of the Mediator complex.

The protein localises to the nucleus. Component of the Mediator complex, a coactivator involved in the regulated transcription of nearly all RNA polymerase II-dependent genes. Mediator functions as a bridge to convey information from gene-specific regulatory proteins to the basal RNA polymerase II transcription machinery. Mediator is recruited to promoters by direct interactions with regulatory proteins and serves as a scaffold for the assembly of a functional preinitiation complex with RNA polymerase II and the general transcription factors. This Eremothecium gossypii (strain ATCC 10895 / CBS 109.51 / FGSC 9923 / NRRL Y-1056) (Yeast) protein is Mediator of RNA polymerase II transcription subunit 5 (NUT1).